The following is an 813-amino-acid chain: MDATALERDAVQFARLAVQRDHEGRYSEAVFYYKEAAQALIYAEMAGSSLENIQEKITEYLERVQALHSAVQSKSADPLKSKHQLDLERAHFLVTQAFDEDEKENVEDAIELYTEAVDLCLKTSYETADKVLQNKLKQLARQALDRAEALSEPLTKPVGKISSTSVKPKPPPVRAHFPLGANPFLERPQSFISPQSCDAQGQRYTAEEIEVLRTTSKINGIEYVPFMNVDLRERFAYPMPFCDRWGKLPLSPKQKTTFSKWVRPEDLTNNPTMIYTVSSFSIKQTIVSDCSFVASLAISAAYERRFNKKLITGIIYPQNKDGEPEYNPCGKYMVKLHLNGVPRKVIIDDQLPVDHKGELLCSYSNNKSELWVSLIEKAYMKVMGGYDFPGSNSNIDLHALTGWIPERIAMHSDSQTFSKDNSFRMLYQRFHKGDVLITASTGMMTEAEGEKWGLVPTHAYAVLDIREFKGLRFIQLKNPWSHLRWKGRYSENDVKNWTPELQKYLNFDPRTAQKIDNGIFWISWDDLCQYYDVIYLSWNPGLFKESTCIHSTWDAKQGPVKDAYSLANNPQYKLEVQCPQGGAAVWVLLSRHITDKDDFANNREFITMVVYKTDGKKVYYPADPPPYIDGIRINSPHYLTKIKLTTPGTHTFTLVVSQYEKQNTIHYTVRVYSACSFTFSKIPSPYTLSKRINGKWSGQSAGGCGNFQETHKNNPIYQFHIEKTGPLLIELRGPRQYSVGFEVVTVSTLGDPGPHGFLRKSSGDYRCGFCYLELENIPSGIFNIIPSTFLPKQEGPFFLDFNSIIPIKITQLQ.

Met1 is subject to N-acetylmethionine. Position 95 is a phosphothreonine (Thr95). In terms of domain architecture, Calpain catalytic spans 232-540 (RERFAYPMPF…YDVIYLSWNP (309 aa)). Residues Cys290, His458, and Asn478 contribute to the active site. The interval 541-701 (GLFKESTCIH…INGKWSGQSA (161 aa)) is domain III. The interval 702-813 (GGCGNFQETH…IIPIKITQLQ (112 aa)) is domain N.

Belongs to the peptidase C2 family. In terms of tissue distribution, ubiquitous.

Its subcellular location is the nucleus. In terms of biological role, calcium-regulated non-lysosomal thiol-protease. This Homo sapiens (Human) protein is Calpain-7 (CAPN7).